Here is a 675-residue protein sequence, read N- to C-terminus: MRKERLEKGSWLGMLITLGVVYGDIGTSPLYVMNALINDAGPLKNATPDYVIGSVSLIFWTLMLITTVKYVLVALRADNHHEGGIFALYALVRHRAKWLIFVALIGGAALLADGTLTPAVTVTSAVEGLKGLPDLRAFSQYSWLVPLSVTLILVSLFTIQVLGTAVVGRSFGPMMLLWFIVIGGIGLLNISQAPAILRAFSPVYAIQVLFSPTNKMGIFILGSVFLATTGAEALYSDMGHVGKANIDATWPFVYAMLILNYLGQGAWMLTHSQGPAWRNVTNINPFYEMIPSGGRIAMIVLATVAAIIASQALITGSYTLVDEAVGLKFLPRMIIKHPSNVRSQIYIGAINWLLCLVTLSIVWLFQTSAHMEAAYGLAITLTMLMTTILLSQWVQMKGHRFWSLALLAGFGLLETLFLVASLTKFIHGGYLTLGLTLMIFLIMVVWFFGNRRRLRYNQADEQISLLNYRSQLIQLSQDDNQPLFATNLVYLAKVDQLHRVKRSILYSILDKRPKRAKVYWFITINETNRPYDCSYSVDMLGTRNVVEVRLNLGFRKSQHINRYLRAIVTSLIADHSIDPQYSNYGITQPRQVGDFKFVVQNQQIMDLAGNPTMHQFDRFLIGGRIFLQNITPSPAIWYGLEFSDVLEETIPLFTKPMTDPALVHLAKRQTTRHQV.

Helical transmembrane passes span 12-32 (LGMLITLGVVYGDIGTSPLYV), 55-75 (VSLIFWTLMLITTVKYVLVAL), 98-118 (WLIFVALIGGAALLADGTLTP), 143-163 (WLVPLSVTLILVSLFTIQVLG), 170-190 (SFGPMMLLWFIVIGGIGLLNI), 216-236 (MGIFILGSVFLATTGAEALYS), 249-269 (TWPFVYAMLILNYLGQGAWML), 296-316 (IAMIVLATVAAIIASQALITG), 345-365 (IYIGAINWLLCLVTLSIVWLF), 374-394 (AYGLAITLTMLMTTILLSQWV), 401-421 (FWSLALLAGFGLLETLFLVAS), and 428-448 (GGYLTLGLTLMIFLIMVVWFF).

It belongs to the HAK/KUP transporter (TC 2.A.72) family.

It localises to the cell membrane. The enzyme catalyses K(+)(in) + H(+)(in) = K(+)(out) + H(+)(out). Functionally, transport of potassium into the cell. Likely operates as a K(+):H(+) symporter. The chain is Probable potassium transport system protein Kup from Levilactobacillus brevis (strain ATCC 367 / BCRC 12310 / CIP 105137 / JCM 1170 / LMG 11437 / NCIMB 947 / NCTC 947) (Lactobacillus brevis).